The following is a 359-amino-acid chain: Chorismate synthase (359 aa).

Residues Arg-48 and Arg-54 each contribute to the NADP(+) site. FMN is bound by residues 129–131 (RSS), 241–242 (NA), Gly-285, 300–304 (KPTSS), and Arg-326.

This sequence belongs to the chorismate synthase family. Homotetramer. Requires FMNH2 as cofactor.

It carries out the reaction 5-O-(1-carboxyvinyl)-3-phosphoshikimate = chorismate + phosphate. It participates in metabolic intermediate biosynthesis; chorismate biosynthesis; chorismate from D-erythrose 4-phosphate and phosphoenolpyruvate: step 7/7. Its function is as follows. Catalyzes the anti-1,4-elimination of the C-3 phosphate and the C-6 proR hydrogen from 5-enolpyruvylshikimate-3-phosphate (EPSP) to yield chorismate, which is the branch point compound that serves as the starting substrate for the three terminal pathways of aromatic amino acid biosynthesis. This reaction introduces a second double bond into the aromatic ring system. In Afipia carboxidovorans (strain ATCC 49405 / DSM 1227 / KCTC 32145 / OM5) (Oligotropha carboxidovorans), this protein is Chorismate synthase.